We begin with the raw amino-acid sequence, 118 residues long: uncharacterized protein (118 aa).

This sequence to M.jannaschii MJ0310 and MJ1340.

This is an uncharacterized protein from Methanocaldococcus jannaschii (strain ATCC 43067 / DSM 2661 / JAL-1 / JCM 10045 / NBRC 100440) (Methanococcus jannaschii).